A 212-amino-acid chain; its full sequence is MVPSDRDRVLAEAGVSRETAAALDLYVAQLTRWQAIKNLVGPATLPDVWTRHIADSLQLLDAAPQARTWLDLGSGAGIPGLILAIAGVRNRPDLRVDLVESNARKGAFLQETARLTGAPARIHVARIERVVAGFRGVDVVCARALAPLPQLIAWTAPLLKSGTIGLFPKGREAQSELTAAREKWTFVADVIPSRTDSSAGIVRISSLSDPLP.

Residues Gly73, Ile127 to Glu128, and Arg143 each bind S-adenosyl-L-methionine.

The protein belongs to the methyltransferase superfamily. RNA methyltransferase RsmG family.

The protein resides in the cytoplasm. The catalysed reaction is guanosine(527) in 16S rRNA + S-adenosyl-L-methionine = N(7)-methylguanosine(527) in 16S rRNA + S-adenosyl-L-homocysteine. Functionally, specifically methylates the N7 position of guanine in position 527 of 16S rRNA. The protein is Ribosomal RNA small subunit methyltransferase G of Methylobacterium sp. (strain 4-46).